Reading from the N-terminus, the 340-residue chain is Adenosine receptor A2b (340 aa).

Over 1 to 6 (MNTMKT) the chain is Extracellular. The helical transmembrane segment at 7-31 (TYIVLELIIAVLSIAGNVLVCWAVA) threads the bilayer. At 32–41 (INSTLKNATN) the chain is on the cytoplasmic side. A helical membrane pass occupies residues 42–65 (YFLVSLAVADIAVGLLAIPFAITI). Over 66-76 (SIGFQVDFHSC) the chain is Extracellular. Cys-76 and Cys-171 form a disulfide bridge. Residues 77–99 (LFFACFVLVLTQSSIFSLLAVAI) traverse the membrane as a helical segment. The Cytoplasmic portion of the chain corresponds to 100–119 (DRYLAIKIPLRYNSLVTGKR). The helical transmembrane segment at 120–142 (ARGLIAVLWLLSFVIGLTPLMGW) threads the bilayer. Over 143–178 (NKAMSGCPNSTNETGADHGAGHHGCFISCLFENVVT) the chain is Extracellular. N-linked (GlcNAc...) asparagine glycosylation is found at Asn-151 and Asn-154. Position 174 (Glu-174) interacts with adenosine. A helical transmembrane segment spans residues 179 to 203 (MSYMVYFNFFGCVLLPLIIMLGIYI). The Cytoplasmic portion of the chain corresponds to 204-235 (KIFMVACKQLHQIELMGNSRTTLQKEVHAAKS). Residues 236–259 (LAIIVGLFAFCWLPLHILNCITHF) traverse the membrane as a helical segment. An adenosine-binding site is contributed by Asn-254. The Extracellular portion of the chain corresponds to 260–267 (HEEFSKSK). Residues 268–291 (PEWVMYVAIILSHANSVINPIIYA) traverse the membrane as a helical segment. The adenosine site is built by Ser-279 and His-280. Over 292 to 340 (YRIRDFRYTFHKIISKILCKTDDFPKCTTDNNQHLTVTNVNAPAASVTI) the chain is Cytoplasmic. Cys-310 is lipidated: S-palmitoyl cysteine.

This sequence belongs to the G-protein coupled receptor 1 family.

It localises to the cell membrane. Its function is as follows. Receptor for adenosine. The activity of this receptor is mediated by G proteins which activate adenylyl cyclase. The chain is Adenosine receptor A2b (ADORA2B) from Gallus gallus (Chicken).